The sequence spans 726 residues: Catalase-peroxidase (726 aa).

Positions 1–33 are disordered; it reads MSTSDDIHNTTATGKCPFHQGGHDQSAGAGTTT. Residues 105-226 constitute a cross-link (tryptophyl-tyrosyl-methioninium (Trp-Tyr) (with M-252)); sequence WHGAGTYRSI…LGATEMGLIY (122 aa). The active-site Proton acceptor is the His-106. Residues 226-252 constitute a cross-link (tryptophyl-tyrosyl-methioninium (Tyr-Met) (with W-105)); the sequence is YVNPEGPDHSGEPLSAAAAIRATFGNM. Position 267 (His-267) interacts with heme b.

Belongs to the peroxidase family. Peroxidase/catalase subfamily. As to quaternary structure, homodimer or homotetramer. Heme b serves as cofactor. Post-translationally, formation of the three residue Trp-Tyr-Met cross-link is important for the catalase, but not the peroxidase activity of the enzyme.

The enzyme catalyses H2O2 + AH2 = A + 2 H2O. The catalysed reaction is 2 H2O2 = O2 + 2 H2O. Functionally, bifunctional enzyme with both catalase and broad-spectrum peroxidase activity. In Escherichia coli (strain K12 / DH10B), this protein is Catalase-peroxidase.